The sequence spans 242 residues: MRWKDEGVIIAVKKYGDKNLILSLFTKNHGKCRGLTRLTNNSNYKFQISNLLHAEWSAKLPENLGFLKCELIESPFHHFFQDRLKSIAIVSFSSILEKVLPESESCIKLYDNFRHFIDVIKHNSQFWQSHYLNLELLLLTQLGFKLDLSKCAVTGVKENLQFISPKTGRAVSKKVGDCYADKLLPFPQMLHDVYNNNLQNSYSYQEFRLGLKITGYFLNKYLFLQLNAKFPELRNFMLSFES.

Belongs to the RecO family.

Its function is as follows. Involved in DNA repair and RecF pathway recombination. The chain is DNA repair protein RecO from Wolbachia pipientis subsp. Culex pipiens (strain wPip).